Reading from the N-terminus, the 507-residue chain is ATP synthase subunit alpha, chloroplastic (507 aa).

170–177 is a binding site for ATP; sequence GDRQTGKT.

Belongs to the ATPase alpha/beta chains family. As to quaternary structure, F-type ATPases have 2 components, CF(1) - the catalytic core - and CF(0) - the membrane proton channel. CF(1) has five subunits: alpha(3), beta(3), gamma(1), delta(1), epsilon(1). CF(0) has four main subunits: a, b, b' and c.

The protein localises to the plastid. The protein resides in the chloroplast thylakoid membrane. It catalyses the reaction ATP + H2O + 4 H(+)(in) = ADP + phosphate + 5 H(+)(out). Its function is as follows. Produces ATP from ADP in the presence of a proton gradient across the membrane. The alpha chain is a regulatory subunit. The protein is ATP synthase subunit alpha, chloroplastic of Nicotiana sylvestris (Wood tobacco).